We begin with the raw amino-acid sequence, 206 residues long: Large ribosomal subunit protein uL4 (206 aa).

The interval 45–76 (RQGTQSAKTRTEVSGGGIKPWRQKGTGRARQG) is disordered.

It belongs to the universal ribosomal protein uL4 family. As to quaternary structure, part of the 50S ribosomal subunit.

In terms of biological role, one of the primary rRNA binding proteins, this protein initially binds near the 5'-end of the 23S rRNA. It is important during the early stages of 50S assembly. It makes multiple contacts with different domains of the 23S rRNA in the assembled 50S subunit and ribosome. Functionally, forms part of the polypeptide exit tunnel. In Clostridium acetobutylicum (strain ATCC 824 / DSM 792 / JCM 1419 / IAM 19013 / LMG 5710 / NBRC 13948 / NRRL B-527 / VKM B-1787 / 2291 / W), this protein is Large ribosomal subunit protein uL4.